The sequence spans 266 residues: L-cystine-binding protein TcyJ (266 aa).

The first 29 residues, 1-29 (MKLAHLGRQALMGVMAVALVAGMSVKSFA), serve as a signal peptide directing secretion.

It belongs to the bacterial solute-binding protein 3 family. The complex is composed of two ATP-binding proteins (TcyN), two transmembrane proteins (TcyL) and a solute-binding protein (TcyJ).

The protein resides in the periplasm. Part of the ABC transporter complex TcyJLN involved in L-cystine import. Binds cystine. The polypeptide is L-cystine-binding protein TcyJ (Escherichia coli O6:H1 (strain CFT073 / ATCC 700928 / UPEC)).